The chain runs to 86 residues: Large ribosomal subunit protein bL27 (86 aa).

The disordered stretch occupies residues 1–26 (MASKKAGGSTKNGRDSQSKRLGVKRF).

It belongs to the bacterial ribosomal protein bL27 family.

In Bdellovibrio bacteriovorus (strain ATCC 15356 / DSM 50701 / NCIMB 9529 / HD100), this protein is Large ribosomal subunit protein bL27.